Here is a 106-residue protein sequence, read N- to C-terminus: Small ribosomal subunit protein uS10 (106 aa).

It belongs to the universal ribosomal protein uS10 family. Part of the 30S ribosomal subunit.

Involved in the binding of tRNA to the ribosomes. The protein is Small ribosomal subunit protein uS10 of Synechococcus sp. (strain RCC307).